The following is a 129-amino-acid chain: Small ribosomal subunit protein uS9 (129 aa).

It belongs to the universal ribosomal protein uS9 family.

The polypeptide is Small ribosomal subunit protein uS9 (Helicobacter acinonychis (strain Sheeba)).